A 397-amino-acid chain; its full sequence is Growth-regulating factor 5 (397 aa).

Residues 16-51 (PFTPTQWEELEHQALIYKYMVSGVPVPPELIFSIRR) form the QLQ domain. Short sequence motifs (bipartite nuclear localization signal) lie at residues 78-96 (RKPD…KKWR) and 114-121 (RGRNRARK). The WRC domain occupies 81–125 (DPEPGRCRRTDGKKWRCSREAYPDSKYCEKHMHRGRNRARKSLDQ). 4 disordered regions span residues 108-172 (CEKH…SMDA), 197-217 (LDYP…HHAS), 288-320 (PYHH…DHDH), and 340-397 (VLAN…DTGS). Basic residues predominate over residues 111–120 (HMHRGRNRAR). The segment covering 128-172 (TTTTPLTSPSLSFTNNNNPSPTLSSSSSSNSSSTTYSASSSSMDA) has biased composition (low complexity). Residues 288 to 298 (PYHHCSTDHNK) are compositionally biased toward basic and acidic residues.

It belongs to the GRF family. As to quaternary structure, interacts with GIF1. As to expression, strongly expressed in actively growing and developing tissues, such as roots, upper stems, and shoot tips containing the shoot apical meristem (SAM) and flower buds. Also expressed in mature flowers, but weakly expressed in mature stems and leaves.

The protein resides in the nucleus. Functionally, transcription activator that plays a role in the regulation of cell expansion in leaf and cotyledons tissues. Acts together with GIF1 for the development of appropriate leaf size and shape through the promotion and/or maintenance of cell proliferation activity in leaf primordia. This is Growth-regulating factor 5 (GRF5) from Arabidopsis thaliana (Mouse-ear cress).